Consider the following 863-residue polypeptide: Leucine--tRNA ligase (863 aa).

A 'HIGH' region motif is present at residues 42–52; the sequence is PYPSGRLHMGH. A 'KMSKS' region motif is present at residues 622–626; the sequence is KMSKS. Lys625 serves as a coordination point for ATP.

This sequence belongs to the class-I aminoacyl-tRNA synthetase family.

It localises to the cytoplasm. It catalyses the reaction tRNA(Leu) + L-leucine + ATP = L-leucyl-tRNA(Leu) + AMP + diphosphate. In Shewanella denitrificans (strain OS217 / ATCC BAA-1090 / DSM 15013), this protein is Leucine--tRNA ligase.